The sequence spans 860 residues: Leucine--tRNA ligase (860 aa).

A 'HIGH' region motif is present at residues Pro42 to His52. A 'KMSKS' region motif is present at residues Lys619–Ser623. Position 622 (Lys622) interacts with ATP.

Belongs to the class-I aminoacyl-tRNA synthetase family.

The protein localises to the cytoplasm. It carries out the reaction tRNA(Leu) + L-leucine + ATP = L-leucyl-tRNA(Leu) + AMP + diphosphate. In Escherichia coli (strain ATCC 8739 / DSM 1576 / NBRC 3972 / NCIMB 8545 / WDCM 00012 / Crooks), this protein is Leucine--tRNA ligase.